The following is a 476-amino-acid chain: ATP synthase subunit beta (476 aa).

ATP is bound at residue glycine 158–threonine 165.

It belongs to the ATPase alpha/beta chains family. F-type ATPases have 2 components, CF(1) - the catalytic core - and CF(0) - the membrane proton channel. CF(1) has five subunits: alpha(3), beta(3), gamma(1), delta(1), epsilon(1). CF(0) has three main subunits: a(1), b(2) and c(9-12). The alpha and beta chains form an alternating ring which encloses part of the gamma chain. CF(1) is attached to CF(0) by a central stalk formed by the gamma and epsilon chains, while a peripheral stalk is formed by the delta and b chains.

The protein localises to the cell inner membrane. It catalyses the reaction ATP + H2O + 4 H(+)(in) = ADP + phosphate + 5 H(+)(out). Its function is as follows. Produces ATP from ADP in the presence of a proton gradient across the membrane. The catalytic sites are hosted primarily by the beta subunits. This is ATP synthase subunit beta from Paracidovorax citrulli (strain AAC00-1) (Acidovorax citrulli).